The following is a 256-amino-acid chain: uncharacterized protein (256 aa).

The HTH cro/C1-type domain maps to 10-64 (IRALRESRDWSLADLAAATGVSTMGLSYLERGARKPHKSTVQKVENGLGLPPGTY). Residues 21–40 (LADLAAATGVSTMGLSYLER) constitute a DNA-binding region (H-T-H motif).

This is an uncharacterized protein from Mycobacterium bovis (strain ATCC BAA-935 / AF2122/97).